Reading from the N-terminus, the 168-residue chain is MARNVGFFICILILAMDVSAGILGIEAEIAQNKVKHLKMWIFECRDPSYTAFKYGLAACILLVLAHVTANFLGGCLCVASRQDLEKSSANKQLAVASLIFTWIILAIAFSMLIVGTMANSRSRKNCGISHHRVLSIGGILCFVHGLFAVAYYISATASTREQTSAGHA.

A signal peptide spans Met1 to Ala20. 3 helical membrane passes run Leu56–Leu76, Ala94–Val114, and Val133–Ile153.

This sequence belongs to the DESIGUAL family. Mainly expressed in roots, inflorescences and developing leaves, and, at low levels, in mature leaves.

It is found in the endoplasmic reticulum membrane. Involved, partially redundantly with VCC/DEAL1 and DEAL3, to ensure bilateral symmetry development and early leaf margin patterning, probably via the regulation of auxin and CUC2 distribution. The protein is Protein DESIGUAL 2 of Arabidopsis thaliana (Mouse-ear cress).